A 214-amino-acid chain; its full sequence is Large ribosomal subunit protein uL3 (214 aa).

The segment at 133–153 (GRATHGNSRSHNVPGSIGMAQ) is disordered. Glutamine 153 carries the N5-methylglutamine modification.

The protein belongs to the universal ribosomal protein uL3 family. Part of the 50S ribosomal subunit. Forms a cluster with proteins L14 and L19. Methylated by PrmB.

One of the primary rRNA binding proteins, it binds directly near the 3'-end of the 23S rRNA, where it nucleates assembly of the 50S subunit. This chain is Large ribosomal subunit protein uL3, found in Cupriavidus metallidurans (strain ATCC 43123 / DSM 2839 / NBRC 102507 / CH34) (Ralstonia metallidurans).